A 196-amino-acid chain; its full sequence is MLVPTVVEQTSRGERAYDIYSRLLKDRIIMLSGEVNDQMANSVIAQLLFLDAQDSEKDIYLYINSPGGVITSGLAMLDTMNFIKSDVQTIAIGMAASMASVLLAGGTKGKRFALPNSTILIHQPSGGAQGQQTEIEIAAEEILKTRRKMNQILADATGQTIEQIKKDTERDHYMSAQEAKDYGLIDDILVNKNTQK.

Ser-97 serves as the catalytic Nucleophile. Residue His-122 is part of the active site.

Belongs to the peptidase S14 family. In terms of assembly, fourteen ClpP subunits assemble into 2 heptameric rings which stack back to back to give a disk-like structure with a central cavity, resembling the structure of eukaryotic proteasomes.

It is found in the cytoplasm. It catalyses the reaction Hydrolysis of proteins to small peptides in the presence of ATP and magnesium. alpha-casein is the usual test substrate. In the absence of ATP, only oligopeptides shorter than five residues are hydrolyzed (such as succinyl-Leu-Tyr-|-NHMec, and Leu-Tyr-Leu-|-Tyr-Trp, in which cleavage of the -Tyr-|-Leu- and -Tyr-|-Trp bonds also occurs).. Functionally, cleaves peptides in various proteins in a process that requires ATP hydrolysis. Has a chymotrypsin-like activity. Plays a major role in the degradation of misfolded proteins. The sequence is that of ATP-dependent Clp protease proteolytic subunit from Lacticaseibacillus paracasei (strain ATCC 334 / BCRC 17002 / CCUG 31169 / CIP 107868 / KCTC 3260 / NRRL B-441) (Lactobacillus paracasei).